The sequence spans 127 residues: 3-aminoacrylate deaminase RutC (127 aa).

The protein belongs to the RutC family.

The enzyme catalyses (Z)-3-aminoacrylate + H2O + H(+) = 3-oxopropanoate + NH4(+). Its function is as follows. Involved in pyrimidine catabolism. Catalyzes the deamination of 3-aminoacrylate to malonic semialdehyde, a reaction that can also occur spontaneously. RutC may facilitate the reaction and modulate the metabolic fitness, rather than catalyzing essential functions. The sequence is that of 3-aminoacrylate deaminase RutC from Pseudomonas savastanoi pv. phaseolicola (strain 1448A / Race 6) (Pseudomonas syringae pv. phaseolicola (strain 1448A / Race 6)).